The primary structure comprises 913 residues: Probable TonB-dependent receptor HI_1217 (913 aa).

The first 27 residues, 1 to 27 (MKKAIKLNLITLGLINTIGMTITQAQA), serve as a signal peptide directing secretion. The region spanning 42–165 (SNDKKPFTEA…LAGSANFRTL (124 aa)) is the TBDR plug domain. A TBDR beta-barrel domain is found at 176-913 (PFGIILKGMT…TYILSLNYKF (738 aa)). The TonB C-terminal box motif lies at 896-913 (LYNFARGRTYILSLNYKF).

It belongs to the TonB-dependent receptor family.

It is found in the cell outer membrane. Probable receptor, TonB-dependent. This is Probable TonB-dependent receptor HI_1217 from Haemophilus influenzae (strain ATCC 51907 / DSM 11121 / KW20 / Rd).